Reading from the N-terminus, the 70-residue chain is Potassium channel toxin kappa-KTx 2.5 (70 aa).

The N-terminal stretch at 1–26 is a signal peptide; it reads MESSRKSYVLMLFLAFVIMNVCSVSG. The propeptide occupies 27–42; that stretch reads EPKDGEIAGFEMEEAR. 2 disulfides stabilise this stretch: cysteine 46-cysteine 64 and cysteine 50-cysteine 60.

Belongs to the short scorpion toxin superfamily. Potassium channel inhibitor kappa-KTx family. Kappa-KTx 2 subfamily. In terms of tissue distribution, expressed by the venom gland.

The protein resides in the secreted. In terms of biological role, voltage-independently blocks potassium currents on hKv1.1/KCNA1 (IC(50)=217 uM), and hKv1.4/KCNA4 (IC(50)=71 uM) (expressed in CHO cells). This is Potassium channel toxin kappa-KTx 2.5 from Opisthacanthus cayaporum (South American scorpion).